We begin with the raw amino-acid sequence, 87 residues long: MANIKSAKKRAVQSEKRRQHNASQRSMMRTFIKKVYAAVAAGDKAASQAAFVEMQKVVDRMASKGLIHANKAANHKAKLAAQIKKLA.

A compositionally biased stretch (basic residues) spans methionine 1–alanine 11. The interval methionine 1 to serine 26 is disordered.

Belongs to the bacterial ribosomal protein bS20 family.

Its function is as follows. Binds directly to 16S ribosomal RNA. The chain is Small ribosomal subunit protein bS20 from Actinobacillus pleuropneumoniae serotype 5b (strain L20).